We begin with the raw amino-acid sequence, 989 residues long: MMESGVPPCAACGDDAHAACRACSYALCKACLDEDAAEGRTTCARCGGEYGAPDPAHGQGAVVEEEVEESHEPVASGVRERVTMASQLSDHQDEGVHARTMSTHARTISSVSGVGSELNDESGKPIWKNRVESWKEKKKEKKASAKKAAAKAQAPPVEEQIMDEKDLTDAYEPLSRIIPISKNKLTPYRAVIIMRLVVLGLFFHYRITNPVYSAFGLWMTSVICEIWFGFSWILDQFPKWCPINRETYVDRLIARYGDGEDSGLAPVDFFVSTVDPLKEPPLITANTVLSILAVDYPVEKISCYVSDDGSAMLTFESLAETAEFARRWVPFCKKYSIEPRAPEFYFSQKIDYLKDKIHPSFVKERRAMKRDYEEYKVRINALVAKAQKTPEEGWIMQDGTPWPGNNPRDHPGMIQVFLGETGARDFDGNELPRLVYVSREKRPGYQHHKKAGAMNALVRVSAVLTNAPYILNLDCDHYVNNSKAVREAMCFMMDPSVGRDVCYVQFPQRFDGIDRSDRYANRNVVFFDVNMKGLDGLQGPVYVGTGCCFYRQALYGYGPPSLPALPKSSVCSWCCCCCPKKKAEKSEKEMHRDSRREDLESAIFNLREIDNYDEYERSMLISQMSFEKSFGLSSVFIESTLMENGGVPESANPSTLIKEAIHVISCGYEEKTEWGKEIGWIYGSVTEDILTGFKMHCRGWRSIYCMPIRPAFKGSAPINLSDRLHQVLRWALGSVEIFLSRHCPLWYGYGGGRLKWLQRLSYINTIVYPFTSLPLIAYCCLPAICLLTGKFIIPTLSNAATIWFLGLFISIIVTSVLELRWSGIGIEDWWRNEQFWVIGGVSAHLFAVFQGILKMIAGLDTNFTVTAKATDDTEFGELYVFKWTTVLIPPTSILVLNLVGVVAGFSDALNSGYESWGPLFGKVFFAMWVIMHLYPFLKGLMGRQNRTPTIVVLWSVLLASVFSLLWVKIDPFIGSSETTTTNSCANFDC.

Residues 1-184 lie on the Cytoplasmic side of the membrane; sequence MMESGVPPCA…SRIIPISKNK (184 aa). Residues C9, C12, C20, C23, C28, C31, C43, and C46 each coordinate Zn(2+). Residues 9 to 47 form an RING-type; degenerate zinc finger; the sequence is CAACGDDAHAACRACSYALCKACLDEDAAEGRTTCARCG. The segment covering 138–149 has biased composition (basic residues); the sequence is KKEKKASAKKAA. Residues 138 to 158 form a disordered region; it reads KKEKKASAKKAAAKAQAPPVE. The helical transmembrane segment at 185 to 205 threads the bilayer; the sequence is LTPYRAVIIMRLVVLGLFFHY. Residues 206–213 lie on the Extracellular side of the membrane; sequence RITNPVYS. The chain crosses the membrane as a helical span at residues 214–234; sequence AFGLWMTSVICEIWFGFSWIL. Residues 235-772 lie on the Cytoplasmic side of the membrane; that stretch reads DQFPKWCPIN…INTIVYPFTS (538 aa). UDP-alpha-D-glucose contacts are provided by S272, K278, E279, and D308. D308 is a catalytic residue. A coiled-coil region spans residues 362–389; it reads VKERRAMKRDYEEYKVRINALVAKAQKT. K449 is a UDP-alpha-D-glucose binding site. Positions 450 and 474 each coordinate Mn(2+). D688 is a catalytic residue. A helical transmembrane segment spans residues 773–793; it reads LPLIAYCCLPAICLLTGKFII. Residues 794–798 lie on the Extracellular side of the membrane; sequence PTLSN. A helical transmembrane segment spans residues 799-819; it reads AATIWFLGLFISIIVTSVLEL. The Cytoplasmic segment spans residues 820-835; sequence RWSGIGIEDWWRNEQF. The chain crosses the membrane as a helical span at residues 836-856; that stretch reads WVIGGVSAHLFAVFQGILKMI. Residues 857–884 lie on the Extracellular side of the membrane; sequence AGLDTNFTVTAKATDDTEFGELYVFKWT. Residue N862 is glycosylated (N-linked (GlcNAc...) asparagine). The chain crosses the membrane as a helical span at residues 885-905; sequence TVLIPPTSILVLNLVGVVAGF. Residues 906–916 are Cytoplasmic-facing; the sequence is SDALNSGYESW. Residues 917–937 form a helical membrane-spanning segment; sequence GPLFGKVFFAMWVIMHLYPFL. Residues 938–946 lie on the Extracellular side of the membrane; the sequence is KGLMGRQNR. Residues 947 to 967 form a helical membrane-spanning segment; it reads TPTIVVLWSVLLASVFSLLWV. At 968–989 the chain is on the cytoplasmic side; sequence KIDPFIGSSETTTTNSCANFDC.

Belongs to the glycosyltransferase 2 family. Plant cellulose synthase subfamily. Mn(2+) serves as cofactor. It depends on Zn(2+) as a cofactor.

It localises to the cell membrane. It catalyses the reaction [(1-&gt;4)-beta-D-glucosyl](n) + UDP-alpha-D-glucose = [(1-&gt;4)-beta-D-glucosyl](n+1) + UDP + H(+). It participates in glycan metabolism; plant cellulose biosynthesis. Its function is as follows. Catalytic subunit of cellulose synthase terminal complexes ('rosettes'), required for beta-1,4-glucan microfibril crystallization, a major mechanism of the cell wall formation. Involved in the secondary cell wall formation. The chain is Cellulose synthase A catalytic subunit 4 [UDP-forming] (CESA4) from Oryza sativa subsp. indica (Rice).